A 179-amino-acid chain; its full sequence is Natural killer cells antigen CD94 (179 aa).

The Cytoplasmic segment spans residues 1 to 10; that stretch reads MAVFKTTLWR. A helical; Signal-anchor for type II membrane protein transmembrane segment spans residues 11-31; that stretch reads LISGTLGIICLSLMATLGILL. Topologically, residues 32-179 are extracellular; that stretch reads KNSFTKLSVE…NRYICKQQLI (148 aa). Intrachain disulfides connect cysteine 58–cysteine 70 and cysteine 61–cysteine 72. In terms of domain architecture, C-type lectin spans 68 to 175; it reads YRCNCYFISS…CETKNRYICK (108 aa). N-linked (GlcNAc...) asparagine glycans are attached at residues asparagine 83 and asparagine 132. 2 cysteine pairs are disulfide-bonded: cysteine 89–cysteine 174 and cysteine 152–cysteine 166.

Can form disulfide-bonded heterodimer with NKG2 family members KLRC1 and KLRC2. KLRD1-KLRC1 heterodimer interacts with peptide-bound MHC-E-B2M heterotrimeric complex. KLRD1 plays a prominent role in directly interacting with MHC-E. KLRD1-KLRC1 interacts with much higher affinity with peptide-bound MHC-E-B2M than KLRD1-KLRC2. Interacts with the adapter protein TYROBP/DAP12; this interaction is required for cell surface expression and cell activation. As to expression, natural killer cells.

Its subcellular location is the cell membrane. Its function is as follows. Immune receptor involved in self-nonself discrimination. In complex with KLRC1 or KLRC2 on cytotoxic and regulatory lymphocyte subsets, recognizes non-classical major histocompatibility (MHC) class Ib molecule MHC-E loaded with self-peptides derived from the signal sequence of classical MHC class Ia and non-classical MHC class Ib molecules. Enables cytotoxic cells to monitor the expression of MHC class I molecules in healthy cells and to tolerate self. Primarily functions as a ligand binding subunit as it lacks the capacity to signal. KLRD1-KLRC1 acts as an immune inhibitory receptor. Key inhibitory receptor on natural killer (NK) cells that regulates their activation and effector functions. Dominantly counteracts T cell receptor signaling on a subset of memory/effector CD8-positive T cells as part of an antigen-driven response to avoid autoimmunity. On intraepithelial CD8-positive gamma-delta regulatory T cells triggers TGFB1 secretion, which in turn limits the cytotoxic programming of intraepithelial CD8-positive alpha-beta T cells, distinguishing harmless from pathogenic antigens. In MHC-E-rich tumor microenvironment, acts as an immune inhibitory checkpoint and may contribute to progressive loss of effector functions of NK cells and tumor-specific T cells, a state known as cell exhaustion. Upon MHC-E-peptide binding, transmits intracellular signals through KLRC1 immunoreceptor tyrosine-based inhibition motifs (ITIMs) by recruiting INPP5D/SHIP-1 and INPPL1/SHIP-2 tyrosine phosphatases to ITIMs, and ultimately opposing signals transmitted by activating receptors through dephosphorylation of proximal signaling molecules. Functionally, KLRD1-KLRC2 acts as an immune activating receptor. On cytotoxic lymphocyte subsets recognizes MHC-E loaded with signal sequence-derived peptides from non-classical MHC class Ib MHC-G molecules, likely playing a role in the generation and effector functions of adaptive NK cells and in maternal-fetal tolerance during pregnancy. Regulates the effector functions of terminally differentiated cytotoxic lymphocyte subsets, and in particular may play a role in adaptive NK cell response to viral infection. Upon MHC-E-peptide binding, transmits intracellular signals via the adapter protein TYROBP/DAP12, triggering the phosphorylation of proximal signaling molecules and cell activation. The polypeptide is Natural killer cells antigen CD94 (KLRD1) (Macaca mulatta (Rhesus macaque)).